The primary structure comprises 267 residues: Apolipoprotein A-I (267 aa).

An N-terminal signal peptide occupies residues 1 to 18 (MKAAVLTLAVLFLTGSQA). Tandem repeats lie at residues 68-89 (LKLLDNWDSMTSTFSKLREQLG) and 90-111 (PVTQEFWDNLEKETEGLRQEMS). Residues 68 to 267 (LKLLDNWDSM…EEYTKKLNTQ (200 aa)) are 10 X approximate tandem repeats. Met-110 carries the methionine sulfoxide modification. A 3; half-length repeat occupies 112–122 (KDLEEVKAKVQ). Tandem repeats lie at residues 123 to 144 (PYLDDFQKKWQEEMELYRQKVE), 145 to 166 (PLRAELQEGARQKLHELHEKLS), 167 to 188 (PLGEEMRDRARAHVDALRTHLA), 189 to 210 (PYTDELRQRLAARLEALKENGG), and 211 to 232 (ARLAEYHAKASEHLSTLSEKAK). Met-136 bears the Methionine sulfoxide mark. A 9; half-length repeat occupies 233–243 (PALEDLRQGLL). Repeat unit 10 spans residues 244–267 (PVLESFKVSFLSALEEYTKKLNTQ).

Belongs to the apolipoprotein A1/A4/E family. In terms of assembly, homodimer. Interacts with APOA1BP and CLU. Component of a sperm activating protein complex (SPAP), consisting of APOA1, an immunoglobulin heavy chain, an immunoglobulin light chain and albumin. Interacts with NDRG1. Interacts with SCGB3A2. Interacts with NAXE and YJEFN3. Post-translationally, glycosylated. In terms of processing, palmitoylated. As to expression, major protein of plasma HDL, also found in chylomicrons.

It is found in the secreted. In terms of biological role, participates in the reverse transport of cholesterol from tissues to the liver for excretion by promoting cholesterol efflux from tissues and by acting as a cofactor for the lecithin cholesterol acyltransferase (LCAT). As part of the SPAP complex, activates spermatozoa motility. This Pongo abelii (Sumatran orangutan) protein is Apolipoprotein A-I (APOA1).